The chain runs to 574 residues: uncharacterized protein (574 aa).

11 consecutive transmembrane segments (helical) span residues 14–34 (FFPT…LFFG), 54–74 (VVPL…LGIV), 124–144 (WLMA…SDTA), 205–225 (ICKC…TGTI), 253–273 (SWMA…WFIV), 323–343 (LVIF…VIPG), 350–370 (KGYV…FIWP), 403–423 (FPWS…AVRV), 441–461 (MPFF…TEFS), 485–505 (PLYF…LPMA), and 520–540 (MIDM…ITAI). Residues Asn-565 and Asn-569 are each glycosylated (N-linked (GlcNAc...) asparagine).

Belongs to the SLC13A/DASS transporter (TC 2.A.47) family. NADC subfamily.

It localises to the membrane. This is an uncharacterized protein from Caenorhabditis elegans.